The sequence spans 494 residues: Probable cytosol aminopeptidase (494 aa).

2 residues coordinate Mn(2+): K260 and D265. The active site involves K272. D283, D342, and E344 together coordinate Mn(2+). Residue R346 is part of the active site.

This sequence belongs to the peptidase M17 family. Mn(2+) serves as cofactor.

Its subcellular location is the cytoplasm. The enzyme catalyses Release of an N-terminal amino acid, Xaa-|-Yaa-, in which Xaa is preferably Leu, but may be other amino acids including Pro although not Arg or Lys, and Yaa may be Pro. Amino acid amides and methyl esters are also readily hydrolyzed, but rates on arylamides are exceedingly low.. It catalyses the reaction Release of an N-terminal amino acid, preferentially leucine, but not glutamic or aspartic acids.. Presumably involved in the processing and regular turnover of intracellular proteins. Catalyzes the removal of unsubstituted N-terminal amino acids from various peptides. This is Probable cytosol aminopeptidase from Bacillus cereus (strain B4264).